A 211-amino-acid polypeptide reads, in one-letter code: Large ribosomal subunit protein uL4 (211 aa).

Residues 40–87 (QQAHTRQGTASTLTRSEVRGGGRKPYKQKGTGRARQGSIRTPLRPGGG) are disordered. Residues 41–54 (QAHTRQGTASTLTR) are compositionally biased toward polar residues. Over residues 60–71 (GGRKPYKQKGTG) the composition is skewed to basic residues.

The protein belongs to the universal ribosomal protein uL4 family. In terms of assembly, part of the 50S ribosomal subunit.

Its function is as follows. One of the primary rRNA binding proteins, this protein initially binds near the 5'-end of the 23S rRNA. It is important during the early stages of 50S assembly. It makes multiple contacts with different domains of the 23S rRNA in the assembled 50S subunit and ribosome. Forms part of the polypeptide exit tunnel. This is Large ribosomal subunit protein uL4 from Synechococcus sp. (strain WH7803).